The following is a 618-amino-acid chain: 1-deoxy-D-xylulose-5-phosphate synthase (618 aa).

Thiamine diphosphate is bound by residues His75 and 116-118 (GHS). Residue Asp147 participates in Mg(2+) binding. Residues 148–149 (GA), Asn176, Tyr283, and Glu364 each bind thiamine diphosphate. Position 176 (Asn176) interacts with Mg(2+).

Belongs to the transketolase family. DXPS subfamily. In terms of assembly, homodimer. Mg(2+) is required as a cofactor. The cofactor is thiamine diphosphate.

The catalysed reaction is D-glyceraldehyde 3-phosphate + pyruvate + H(+) = 1-deoxy-D-xylulose 5-phosphate + CO2. Its pathway is metabolic intermediate biosynthesis; 1-deoxy-D-xylulose 5-phosphate biosynthesis; 1-deoxy-D-xylulose 5-phosphate from D-glyceraldehyde 3-phosphate and pyruvate: step 1/1. Catalyzes the acyloin condensation reaction between C atoms 2 and 3 of pyruvate and glyceraldehyde 3-phosphate to yield 1-deoxy-D-xylulose-5-phosphate (DXP). The sequence is that of 1-deoxy-D-xylulose-5-phosphate synthase from Thiobacillus denitrificans (strain ATCC 25259 / T1).